The sequence spans 600 residues: Adenine deaminase (600 aa).

The protein belongs to the metallo-dependent hydrolases superfamily. Adenine deaminase family. The cofactor is Mn(2+).

It catalyses the reaction adenine + H2O + H(+) = hypoxanthine + NH4(+). This is Adenine deaminase from Chelativorans sp. (strain BNC1).